A 386-amino-acid polypeptide reads, in one-letter code: MAGKRDYYEILGVDRGASDAEIKKAYRKLAKQYHPDMNPGDKAAEAKFKEINEAYEVLSDPQKRARYDQFGHSAFDPNGFGGGGFGGGFTGGFGDFDFGGFGDIFEAFFGSGFGTRTSSARRGPQKGADLKYSMEVSFEEAAFGTEKEVTVSRLEICPTCSGSGTKPGHQPVTCRQCNGTGQVQYKQRTPFGQIVNVRTCDVCHGEGKIITNPCETCGGKGRVRKHTKLKVRIPAGIDNGETISLRGEGEHGIKGGPSGDLFITIKVKPHPIFKRHGNDVNCEIPITFTQAALGAEIEVPTLDGKEKIVIPEGTQTGTVFKLKGKGIPFLRSSGRGDQYVKVNIEVPRKLNEKQKEVLRQFAELVGDEVHEQRKGFFNKMKDALGM.

The J domain occupies 6–71 (DYYEILGVDR…QKRARYDQFG (66 aa)). The segment at 144–226 (GTEKEVTVSR…CGGKGRVRKH (83 aa)) adopts a CR-type zinc-finger fold. Zn(2+) contacts are provided by C157, C160, C174, C177, C200, C203, C214, and C217. CXXCXGXG motif repeat units lie at residues 157-164 (CPTCSGSG), 174-181 (CRQCNGTG), 200-207 (CDVCHGEG), and 214-221 (CETCGGKG).

Belongs to the DnaJ family. As to quaternary structure, homodimer. Zn(2+) is required as a cofactor.

Its subcellular location is the cytoplasm. Its function is as follows. Participates actively in the response to hyperosmotic and heat shock by preventing the aggregation of stress-denatured proteins and by disaggregating proteins, also in an autonomous, DnaK-independent fashion. Unfolded proteins bind initially to DnaJ; upon interaction with the DnaJ-bound protein, DnaK hydrolyzes its bound ATP, resulting in the formation of a stable complex. GrpE releases ADP from DnaK; ATP binding to DnaK triggers the release of the substrate protein, thus completing the reaction cycle. Several rounds of ATP-dependent interactions between DnaJ, DnaK and GrpE are required for fully efficient folding. Also involved, together with DnaK and GrpE, in the DNA replication of plasmids through activation of initiation proteins. This chain is Chaperone protein DnaJ, found in Acetivibrio thermocellus (strain ATCC 27405 / DSM 1237 / JCM 9322 / NBRC 103400 / NCIMB 10682 / NRRL B-4536 / VPI 7372) (Clostridium thermocellum).